The primary structure comprises 316 residues: Ribosomal protein L11 methyltransferase (316 aa).

4 residues coordinate S-adenosyl-L-methionine: T157, G178, D200, and N243.

The protein belongs to the methyltransferase superfamily. PrmA family.

It is found in the cytoplasm. The catalysed reaction is L-lysyl-[protein] + 3 S-adenosyl-L-methionine = N(6),N(6),N(6)-trimethyl-L-lysyl-[protein] + 3 S-adenosyl-L-homocysteine + 3 H(+). In terms of biological role, methylates ribosomal protein L11. This Streptococcus pneumoniae serotype 2 (strain D39 / NCTC 7466) protein is Ribosomal protein L11 methyltransferase.